The following is a 1099-amino-acid chain: Carbamoyl phosphate synthase large chain (1099 aa).

Residues 1–402 are carboxyphosphate synthetic domain; that stretch reads MPKRTDLKSV…ALQKALRSLE (402 aa). Residues R129, R169, G175, G176, E208, I210, E215, G241, V242, H243, Q285, and E299 each contribute to the ATP site. Positions 133-328 constitute an ATP-grasp 1 domain; that stretch reads KGVVERCGAE…IAKIATKLSL (196 aa). 3 residues coordinate Mg(2+): Q285, E299, and N301. 3 residues coordinate Mn(2+): Q285, E299, and N301. The segment at 403-546 is oligomerization domain; it reads QKGSQLDFSH…YHYSSYDEED (144 aa). Residues 547 to 950 form a carbamoyl phosphate synthetic domain region; it reads EVALHSKPSI…AFAKSQAAAN (404 aa). The 192-residue stretch at 677–868 folds into the ATP-grasp 2 domain; it reads SRVLDEAGLI…MAKAAALIGT (192 aa). Positions 713, 752, 754, 759, 784, 785, 786, 787, 827, and 839 each coordinate ATP. Mg(2+) contacts are provided by Q827, E839, and N841. Residues Q827, E839, and N841 each contribute to the Mn(2+) site. The 149-residue stretch at 951 to 1099 folds into the MGS-like domain; it reads NALPTEGKIF…AENLKALQNG (149 aa). An allosteric domain region spans residues 951 to 1099; that stretch reads NALPTEGKIF…AENLKALQNG (149 aa).

It belongs to the CarB family. As to quaternary structure, composed of two chains; the small (or glutamine) chain promotes the hydrolysis of glutamine to ammonia, which is used by the large (or ammonia) chain to synthesize carbamoyl phosphate. Tetramer of heterodimers (alpha,beta)4. The cofactor is Mg(2+). Requires Mn(2+) as cofactor.

It carries out the reaction hydrogencarbonate + L-glutamine + 2 ATP + H2O = carbamoyl phosphate + L-glutamate + 2 ADP + phosphate + 2 H(+). The catalysed reaction is hydrogencarbonate + NH4(+) + 2 ATP = carbamoyl phosphate + 2 ADP + phosphate + 2 H(+). It functions in the pathway amino-acid biosynthesis; L-arginine biosynthesis; carbamoyl phosphate from bicarbonate: step 1/1. Its pathway is pyrimidine metabolism; UMP biosynthesis via de novo pathway; (S)-dihydroorotate from bicarbonate: step 1/3. Its function is as follows. Large subunit of the glutamine-dependent carbamoyl phosphate synthetase (CPSase). CPSase catalyzes the formation of carbamoyl phosphate from the ammonia moiety of glutamine, carbonate, and phosphate donated by ATP, constituting the first step of 2 biosynthetic pathways, one leading to arginine and/or urea and the other to pyrimidine nucleotides. The large subunit (synthetase) binds the substrates ammonia (free or transferred from glutamine from the small subunit), hydrogencarbonate and ATP and carries out an ATP-coupled ligase reaction, activating hydrogencarbonate by forming carboxy phosphate which reacts with ammonia to form carbamoyl phosphate. In Arthrobacter sp. (strain FB24), this protein is Carbamoyl phosphate synthase large chain.